The primary structure comprises 293 residues: Ribosomal protein L11 methyltransferase (293 aa).

S-adenosyl-L-methionine is bound by residues Thr-145, Gly-166, Asp-188, and Asn-230.

The protein belongs to the methyltransferase superfamily. PrmA family.

It is found in the cytoplasm. It carries out the reaction L-lysyl-[protein] + 3 S-adenosyl-L-methionine = N(6),N(6),N(6)-trimethyl-L-lysyl-[protein] + 3 S-adenosyl-L-homocysteine + 3 H(+). In terms of biological role, methylates ribosomal protein L11. The sequence is that of Ribosomal protein L11 methyltransferase from Actinobacillus succinogenes (strain ATCC 55618 / DSM 22257 / CCUG 43843 / 130Z).